Consider the following 75-residue polypeptide: Defensin-like protein 59 (75 aa).

Positions 1 to 19 (MNITKSYVVIFFLVMLTNS) are cleaved as a signal peptide. Cystine bridges form between cysteine 39/cysteine 73, cysteine 43/cysteine 66, cysteine 52/cysteine 71, and cysteine 56/cysteine 72.

The protein belongs to the DEFL family.

The protein localises to the secreted. This chain is Defensin-like protein 59, found in Arabidopsis thaliana (Mouse-ear cress).